We begin with the raw amino-acid sequence, 68 residues long: Serine rich endogenous peptide 22 (68 aa).

A signal peptide spans 1 to 25 (MNKALVWLITLLFLIFSATPNRVLA). The SCOOP motif motif lies at 50-64 (KIGVGASNSGHSPGA). The SxS motif essential for MIK2 binding motif lies at 56–58 (SNS).

It belongs to the serine rich endogenous peptide (SCOOP) phytocytokine family. As to quaternary structure, interacts with MIK2 (via extracellular leucine-rich repeat domain); this interaction triggers the formation of complex between MIK2 and the BAK1/SERK3 and SERK4 coreceptors, and subsequent BAK1 activation by phosphorylation.

The protein localises to the cell membrane. It localises to the secreted. Its subcellular location is the extracellular space. It is found in the apoplast. Functionally, brassicaceae-specific phytocytokine (plant endogenous peptide released into the apoplast) perceived by MIK2 in a BAK1/SERK3 and SERK4 coreceptors-dependent manner, that modulates various physiological and antimicrobial processes including growth prevention and reactive oxygen species (ROS) response regulation. The polypeptide is Serine rich endogenous peptide 22 (Arabidopsis thaliana (Mouse-ear cress)).